We begin with the raw amino-acid sequence, 505 residues long: N-succinylglutamate 5-semialdehyde dehydrogenase (505 aa).

NAD(+) is bound at residue 234–239; the sequence is GSAHTG. Residues glutamate 257 and cysteine 291 contribute to the active site.

Belongs to the aldehyde dehydrogenase family. AstD subfamily.

It carries out the reaction N-succinyl-L-glutamate 5-semialdehyde + NAD(+) + H2O = N-succinyl-L-glutamate + NADH + 2 H(+). Its pathway is amino-acid degradation; L-arginine degradation via AST pathway; L-glutamate and succinate from L-arginine: step 4/5. In terms of biological role, catalyzes the NAD-dependent reduction of succinylglutamate semialdehyde into succinylglutamate. This is N-succinylglutamate 5-semialdehyde dehydrogenase from Yersinia pestis bv. Antiqua (strain Antiqua).